The primary structure comprises 197 residues: MSASRFIKCVTVGDGAVGKTCLLISYTSNTFPTDYVPTVFDNFSANVVVNGATVNLGLWDTAGQEDYNRLRPLSYRGADVFILAFSLISKASYENVSKKWIPELKHYAPGVPIVLVGTKLDLRDDKQFFIDHPGAVPITTAQGEELRKLIGAPAYIECSSKTQQNVKAVFDAAIKVVLQPPKTKKKKSKAQKACSIL.

Residue 13–20 participates in GTP binding; it reads GDGAVGKT. The Effector region signature appears at 35 to 43; the sequence is YVPTVFDNF. GTP is bound by residues 60-64 and 118-121; these read DTAGQ and TKLD. The residue at position 194 (Cys194) is a Cysteine methyl ester. The S-geranylgeranyl cysteine moiety is linked to residue Cys194. Residues 195–197 constitute a propeptide, removed in mature form; it reads SIL.

The protein belongs to the small GTPase superfamily. Rho family.

The protein localises to the cytoplasm. The protein resides in the membrane. Its function is as follows. Inactive GDP-bound Rho GTPases reside in the cytosol, are found in a complex with Rho GDP-dissociation inhibitors (Rho GDIs), and are released from the GDI protein in order to translocate to membranes upon activation. This chain is Rac-like GTP-binding protein RHO1 (RHO1), found in Beta vulgaris (Sugar beet).